Consider the following 620-residue polypeptide: Chaperone protein HscA homolog (620 aa).

This sequence belongs to the heat shock protein 70 family.

Its function is as follows. Chaperone involved in the maturation of iron-sulfur cluster-containing proteins. Has a low intrinsic ATPase activity which is markedly stimulated by HscB. The protein is Chaperone protein HscA homolog of Shewanella sp. (strain ANA-3).